The following is a 293-amino-acid chain: Pyridoxal 5'-phosphate synthase subunit PdxS (293 aa).

Residue Asp-25 coordinates D-ribose 5-phosphate. The Schiff-base intermediate with D-ribose 5-phosphate role is filled by Lys-82. Gly-154 lines the D-ribose 5-phosphate pocket. A D-glyceraldehyde 3-phosphate-binding site is contributed by Arg-166. Residues Gly-215 and 236-237 (GS) contribute to the D-ribose 5-phosphate site.

This sequence belongs to the PdxS/SNZ family. In the presence of PdxT, forms a dodecamer of heterodimers.

It catalyses the reaction aldehydo-D-ribose 5-phosphate + D-glyceraldehyde 3-phosphate + L-glutamine = pyridoxal 5'-phosphate + L-glutamate + phosphate + 3 H2O + H(+). Its pathway is cofactor biosynthesis; pyridoxal 5'-phosphate biosynthesis. Its function is as follows. Catalyzes the formation of pyridoxal 5'-phosphate from ribose 5-phosphate (RBP), glyceraldehyde 3-phosphate (G3P) and ammonia. The ammonia is provided by the PdxT subunit. Can also use ribulose 5-phosphate and dihydroxyacetone phosphate as substrates, resulting from enzyme-catalyzed isomerization of RBP and G3P, respectively. This is Pyridoxal 5'-phosphate synthase subunit PdxS from Thermotoga petrophila (strain ATCC BAA-488 / DSM 13995 / JCM 10881 / RKU-1).